The chain runs to 351 residues: Keratocan (351 aa).

Positions 1–20 (MATPNCLILWVLLIADTVWT) are cleaved as a signal peptide. In terms of domain architecture, LRRNT spans 34-72 (DWDVHDDFYCPRECFCPPSFPTALYCENRGLTEIPPIPS). 2 disulfide bridges follow: Cys-43-Cys-49 and Cys-47-Cys-59. LRR repeat units lie at residues 73–94 (RIWYLYLENNLIESIPEKPFEN), 97–118 (QLRWINLNKNKITNYGIEKGAL), 123–143 (KLLFLFLEDNELEEVPSPLPR), 144–165 (SLEQLQLARNKVSRIPQGTFSN), 168–181 (NLTLLDLQHNKLLD), 194–214 (NLMQLNMAKNALRNMPPRLPA), 215–236 (NTMQLFLDNNSIEGIPENYFNV), 239–259 (KVAFLRLNHNKLSDAGLPSRG), 264–283 (SILDLQLSYNQLTNFPRINA), and 284–305 (NLQHLHLDHNKIKNVNMSVICP). An N-linked (GlcNAc...) (keratan sulfate) asparagine glycan is attached at Asn-94. Asn-168 carries N-linked (GlcNAc...) (keratan sulfate) asparagine glycosylation. N-linked (GlcNAc...) asparagine glycosylation occurs at Asn-223. Residue Asn-299 is glycosylated (N-linked (GlcNAc...) asparagine). Cys-304 and Cys-342 form a disulfide bridge.

It belongs to the small leucine-rich proteoglycan (SLRP) family. SLRP class II subfamily. In terms of processing, binds keratan sulfate chains. As to expression, selectively expressed in cornea of adult where it is detected in keratocytes but not in scleral cells. In embryo, first detected in periocular mesenchymal cells migrating toward developing cornea on 13.5 dpc; expression gradually restricted to corneal stromal cells on 14.5 to 18.5 dpc. Detected in scleral cells of 15.5 dpc but not in 18.5 dpc embryos.

The protein resides in the secreted. It is found in the extracellular space. Its subcellular location is the extracellular matrix. In terms of biological role, may be important in developing and maintaining corneal transparency and for the structure of the stromal matrix. The chain is Keratocan (Kera) from Mus musculus (Mouse).